Reading from the N-terminus, the 213-residue chain is MKGIIGRKLGMTTIYEDGKALGVTVIKAGPCTVVQKKTAAGGEYNAIQLGFEELSPERAKKLLTKPILKKFEAAKVKPHRILKEIRVENPDEYNVGDVIDAGIFKEGELVDVTGWTKGRGFTGAMKRWNFGGGEVTHGSKFHRELGSVGNHTEPAKIWKGKKMPGRYGNERVTVLNVKVVKVDAENGLIAIHGAVPGARGGLVIIRAAKRPRK.

Belongs to the universal ribosomal protein uL3 family. As to quaternary structure, part of the 50S ribosomal subunit. Forms a cluster with proteins L14 and L19.

In terms of biological role, one of the primary rRNA binding proteins, it binds directly near the 3'-end of the 23S rRNA, where it nucleates assembly of the 50S subunit. The sequence is that of Large ribosomal subunit protein uL3 from Kosmotoga olearia (strain ATCC BAA-1733 / DSM 21960 / TBF 19.5.1).